The chain runs to 227 residues: UPF0173 metal-dependent hydrolase BT9727_4343 (227 aa).

The protein belongs to the UPF0173 family.

In Bacillus thuringiensis subsp. konkukian (strain 97-27), this protein is UPF0173 metal-dependent hydrolase BT9727_4343.